The sequence spans 112 residues: UPF0102 protein Pmob_0702 (112 aa).

The protein belongs to the UPF0102 family.

In Petrotoga mobilis (strain DSM 10674 / SJ95), this protein is UPF0102 protein Pmob_0702.